The primary structure comprises 130 residues: Small ribosomal subunit protein uS9 (130 aa).

The protein belongs to the universal ribosomal protein uS9 family.

This Aliivibrio fischeri (strain MJ11) (Vibrio fischeri) protein is Small ribosomal subunit protein uS9.